A 358-amino-acid polypeptide reads, in one-letter code: Tripartite motif-containing protein 54 (358 aa).

The RING-type zinc finger occupies 26-82 (CPICLEMFSKPVVILPCQHNLCRKCANDVFQASNPLWQSRGSTTVSSGGRFRCPSCR). Residues 121 to 163 (EQHLMCEEHEEEKINIYCLSCEVPTCSLCKVFGAHKDCEVAPL) form a B box-type zinc finger. Residues C126, H129, C149, and H155 each contribute to the Zn(2+) site. Positions 168-211 (KRQKSELSDGIAMLVAGNDRVQAVITQMEEVCQTIEDNSRRQKQ) are mediates microtubule-binding and homooligomerization. A coiled-coil region spans residues 220-258 (LCAVLEERKGELLQALAREQEEKLQRVRGLIRQYGDHLE). The COS domain maps to 271–329 (MEEPQMALYLQQAKELINKVGAMSKVELAGRPEPGYESMEQFTVRVEHVAEMLRTIDFQ). Positions 326 to 358 (IDFQPGASGEEEEVAPDGEEGSAGPEEERPDGP) are disordered. Residues 334 to 345 (GEEEEVAPDGEE) show a composition bias toward acidic residues.

Homooligomer and heterooligomer. Interacts with tubulin. Interacts with TRIM63 and probably with TRIM55. In terms of tissue distribution, specifically expressed in heart and skeletal muscle.

Its subcellular location is the cytoplasm. It localises to the cytoskeleton. It is found in the myofibril. The protein resides in the sarcomere. The protein localises to the z line. In terms of biological role, may bind and stabilize microtubules during myotubes formation. The protein is Tripartite motif-containing protein 54 (TRIM54) of Homo sapiens (Human).